The following is a 387-amino-acid chain: 3-ketoacyl-CoA thiolase FadA (387 aa).

Cysteine 91 serves as the catalytic Acyl-thioester intermediate. Active-site proton acceptor residues include histidine 343 and cysteine 373.

It belongs to the thiolase-like superfamily. Thiolase family. Heterotetramer of two alpha chains (FadB) and two beta chains (FadA).

It localises to the cytoplasm. It carries out the reaction an acyl-CoA + acetyl-CoA = a 3-oxoacyl-CoA + CoA. The protein operates within lipid metabolism; fatty acid beta-oxidation. Catalyzes the final step of fatty acid oxidation in which acetyl-CoA is released and the CoA ester of a fatty acid two carbons shorter is formed. Involved in the aerobic and anaerobic degradation of long-chain fatty acids. This chain is 3-ketoacyl-CoA thiolase FadA (fadA), found in Escherichia coli (strain K12).